We begin with the raw amino-acid sequence, 198 residues long: Cytokinin riboside 5'-monophosphate phosphoribohydrolase (198 aa).

Residues Glu-91, 109–110 (RK), 126–132 (GVGTAEE), and Thr-138 each bind substrate.

It belongs to the LOG family.

The enzyme catalyses N(6)-(dimethylallyl)adenosine 5'-phosphate + H2O = N(6)-dimethylallyladenine + D-ribose 5-phosphate. The catalysed reaction is 9-ribosyl-trans-zeatin 5'-phosphate + H2O = trans-zeatin + D-ribose 5-phosphate. Its function is as follows. Catalyzes the hydrolytic removal of ribose 5'-monophosphate from nitrogen N6-modified adenosines, the final step of bioactive cytokinin synthesis. This Rhodococcoides fascians (Rhodococcus fascians) protein is Cytokinin riboside 5'-monophosphate phosphoribohydrolase (fas6).